Here is a 465-residue protein sequence, read N- to C-terminus: ATP-dependent RNA helicase ddx19 (465 aa).

A compositionally biased stretch (basic and acidic residues) spans 1–20 (MSEKETNTTSTENKEKEKQE). The segment at 1 to 45 (MSEKETNTTSTENKEKEKQEQTNTNSTTESTNNQVDEEYERPGRS) is disordered. A compositionally biased stretch (low complexity) spans 21–34 (QTNTNSTTESTNNQ). Positions 70 to 98 (KTFEELGLKPELLKGVYAMGYNKPSKIQE) match the Q motif motif. The 167-residue stretch at 102–268 (PIIIQSPNNL…KKIVQDPYTS (167 aa)) folds into the Helicase ATP-binding domain. 115-122 (SQSGTGKT) is an ATP binding site. The DEAD box signature appears at 215 to 218 (DEAD). The Helicase C-terminal domain maps to 297-449 (ILSDIYGFIS…ELKSSEIESL (153 aa)).

Belongs to the DEAD box helicase family. DDX19/DBP5 subfamily.

It carries out the reaction ATP + H2O = ADP + phosphate + H(+). Functionally, ATP-binding RNA helicase required for normal differentiation and development. In Dictyostelium discoideum (Social amoeba), this protein is ATP-dependent RNA helicase ddx19 (helC).